Here is a 133-residue protein sequence, read N- to C-terminus: Beta-synuclein (133 aa).

2 consecutive repeat copies span residues 20–30 and 31–41. Positions 20–66 are 4 X 11 AA tandem repeats of [EGS]-K-T-K-[EQ]-[GQ]-V-X(4); sequence EKTKQGVTEAAEKTKEGVLYVGSKTSGVVQGVASVAEKTKEQASHLG. One copy of the 3; approximate repeat lies at 42–55; that stretch reads SKTSGVVQGVASVA. Position 45 is a phosphoserine (Ser45). The stretch at 56-66 is repeat 4; it reads EKTKEQASHLG. Residues 96-133 form a disordered region; it reads EVAQEAAEEPLIEPLMEPEGESYEDSPQEEYQEYEPEA. Acidic residues predominate over residues 97–133; the sequence is VAQEAAEEPLIEPLMEPEGESYEDSPQEEYQEYEPEA. Ser117 bears the Phosphoserine; by BARK1, CK2 and GRK5 mark.

Belongs to the synuclein family. Phosphorylated. Phosphorylation by G-protein coupled receptor kinases (GRK) is more efficient than phosphorylation by CK1, CK2 and CaM-kinase II. In terms of tissue distribution, highly expressed in the brain.

It localises to the cytoplasm. In terms of biological role, may be involved in neuronal plasticity. The protein is Beta-synuclein (Sncb) of Mus musculus (Mouse).